The chain runs to 868 residues: Alanine--tRNA ligase (868 aa).

H556, H560, C666, and H670 together coordinate Zn(2+).

This sequence belongs to the class-II aminoacyl-tRNA synthetase family. Requires Zn(2+) as cofactor.

It localises to the cytoplasm. It catalyses the reaction tRNA(Ala) + L-alanine + ATP = L-alanyl-tRNA(Ala) + AMP + diphosphate. Catalyzes the attachment of alanine to tRNA(Ala) in a two-step reaction: alanine is first activated by ATP to form Ala-AMP and then transferred to the acceptor end of tRNA(Ala). Also edits incorrectly charged Ser-tRNA(Ala) and Gly-tRNA(Ala) via its editing domain. In Elusimicrobium minutum (strain Pei191), this protein is Alanine--tRNA ligase.